The following is a 105-amino-acid chain: Toxin ParE2 (105 aa).

It belongs to the RelE toxin family.

Functionally, toxic component of a type II toxin-antitoxin (TA) system. Its toxic effect is neutralized by coexpression with cognate antitoxin ParD2. This is Toxin ParE2 (parE2) from Mycobacterium tuberculosis (strain CDC 1551 / Oshkosh).